We begin with the raw amino-acid sequence, 338 residues long: Aspartate carbamoyltransferase catalytic subunit (338 aa).

Residues Arg-72 and Thr-73 each contribute to the carbamoyl phosphate site. Lys-100 contributes to the L-aspartate binding site. Residues Arg-122, His-152, and Gln-155 each coordinate carbamoyl phosphate. Arg-186 and Arg-243 together coordinate L-aspartate. Carbamoyl phosphate contacts are provided by Gly-284 and Pro-285.

The protein belongs to the aspartate/ornithine carbamoyltransferase superfamily. ATCase family. Heterododecamer (2C3:3R2) of six catalytic PyrB chains organized as two trimers (C3), and six regulatory PyrI chains organized as three dimers (R2).

The enzyme catalyses carbamoyl phosphate + L-aspartate = N-carbamoyl-L-aspartate + phosphate + H(+). The protein operates within pyrimidine metabolism; UMP biosynthesis via de novo pathway; (S)-dihydroorotate from bicarbonate: step 2/3. Functionally, catalyzes the condensation of carbamoyl phosphate and aspartate to form carbamoyl aspartate and inorganic phosphate, the committed step in the de novo pyrimidine nucleotide biosynthesis pathway. In Acinetobacter baumannii (strain ACICU), this protein is Aspartate carbamoyltransferase catalytic subunit.